A 1067-amino-acid polypeptide reads, in one-letter code: Tricorn protease homolog 1 (1067 aa).

The disordered stretch occupies residues 518 to 551 (TTPSPFGPQRHGRPFETPDREETPDSEGTPTTRI). Positions 530-540 (RPFETPDREET) are enriched in basic and acidic residues. His-740 serves as the catalytic Charge relay system. The segment at 754-851 (RQGLLGADLS…HAVVVPLADE (98 aa)) is PDZ-like. Residue Gly-914 coordinates substrate. Ser-961 acts as the Nucleophile in catalysis. The active-site Charge relay system is the Glu-1019.

This sequence belongs to the peptidase S41B family. In terms of assembly, forms a homohexameric complex; it is not known if it assembles into higher-order structures.

It is found in the cytoplasm. Stimulated by MgCl2. Degrades oligopeptides in a sequential manner. This chain is Tricorn protease homolog 1 (tri1), found in Streptomyces coelicolor (strain ATCC BAA-471 / A3(2) / M145).